The chain runs to 381 residues: Spindlin interactor and repressor of chromatin-binding protein (381 aa).

A Glycyl lysine isopeptide (Lys-Gly) (interchain with G-Cter in SUMO2) cross-link involves residue Lys49. Ser122 and Ser149 each carry phosphoserine. Polar residues predominate over residues Pro148–Asp158. Residues Pro148–Val170 form a disordered region. Residues Lys190 and Lys221 each participate in a glycyl lysine isopeptide (Lys-Gly) (interchain with G-Cter in SUMO2) cross-link. 3 disordered regions span residues Pro203 to Ser270, Leu285 to Thr320, and Ala335 to Val381. Over residues Arg219–Ala229 the composition is skewed to basic and acidic residues. Phosphoserine is present on residues Ser249 and Ser252. Residues Thr288–Ala299 show a composition bias toward basic and acidic residues. Residues Lys291 and Lys295 each participate in a glycyl lysine isopeptide (Lys-Gly) (interchain with G-Cter in SUMO2) cross-link. The segment covering Pro304 to Pro315 has biased composition (low complexity). Phosphoserine occurs at positions 310 and 313.

In terms of assembly, interacts with SPIN1, SPIN2A, SPIN2B, SPIN3 and SPIN4. Interacts with TCF7L2 in a SPIN1-dependent manner. Interacts with PARP1; promoting PARP1 ADP-ribosyltransferase activity.

The protein resides in the nucleus. It localises to the chromosome. Chromatin protein that stabilizes SPIN1 and enhances its association with histone H3 trimethylated at both 'Lys-4' and 'Lys-9' (H3K4me3K9me3). Positively regulates poly-ADP-ribosylation in response to DNA damage; acts by facilitating PARP1 ADP-ribosyltransferase activity. In Mus musculus (Mouse), this protein is Spindlin interactor and repressor of chromatin-binding protein.